The primary structure comprises 476 residues: MTEVVHLHMPEEARATQSRDATPRERRYYVWTVGCQMNVSDSERLEAALQGVGYAPAERPEDASFIVLNSCSVRASAEERILGKLSEVQRLKRKHPDTKVVLWGCMVGPGNQSIFQSRLPMVDHFVSPSAVDEVLALAPNPIYQLEEPALPVARWDHPPVSVHVPIQYGCNMSCSFCVIPLRRGRERSRPLDEIVEECRRIVARGAKEITLLGQIVDSWGHDLPGRPDLADLLRAVHDIPGLLRLRFLTSHPAWMTDRLIAAVAELPRCMPDINLPVQAGDDALLKIMRRGYTVQRYRDLIAKIRDAIPDVSLTTDVIVGHPGETRERFEGTKRLLEDIRFDKVHIAAFSSRPGTRAADMELDPTLAVPEGEKQLRRIELERLQEQIAAERNARFLHQTVEVLVEGEHKGKWRGRTPGNKLVFFSDPDDWTGRLARVIITHTGPWSLQGVLARSDETFARVNGALHAVAAANGAAV.

Residues 1–14 are compositionally biased toward basic and acidic residues; sequence MTEVVHLHMPEEAR. A disordered region spans residues 1 to 20; it reads MTEVVHLHMPEEARATQSRD. The MTTase N-terminal domain occupies 26 to 147; sequence RRYYVWTVGC…APNPIYQLEE (122 aa). C35, C71, C105, C170, C174, and C177 together coordinate [4Fe-4S] cluster. The 235-residue stretch at 156–390 folds into the Radical SAM core domain; that stretch reads DHPPVSVHVP…ERLQEQIAAE (235 aa). Positions 393 to 453 constitute a TRAM domain; sequence ARFLHQTVEV…PWSLQGVLAR (61 aa).

The protein belongs to the methylthiotransferase family. MiaB subfamily. As to quaternary structure, monomer. Requires [4Fe-4S] cluster as cofactor.

It is found in the cytoplasm. It catalyses the reaction N(6)-dimethylallyladenosine(37) in tRNA + (sulfur carrier)-SH + AH2 + 2 S-adenosyl-L-methionine = 2-methylsulfanyl-N(6)-dimethylallyladenosine(37) in tRNA + (sulfur carrier)-H + 5'-deoxyadenosine + L-methionine + A + S-adenosyl-L-homocysteine + 2 H(+). Functionally, catalyzes the methylthiolation of N6-(dimethylallyl)adenosine (i(6)A), leading to the formation of 2-methylthio-N6-(dimethylallyl)adenosine (ms(2)i(6)A) at position 37 in tRNAs that read codons beginning with uridine. In Roseiflexus sp. (strain RS-1), this protein is tRNA-2-methylthio-N(6)-dimethylallyladenosine synthase.